A 419-amino-acid chain; its full sequence is Serine--tRNA ligase (419 aa).

Position 225-227 (225-227) interacts with L-serine; that stretch reads TAE. 256–258 serves as a coordination point for ATP; sequence RKE. E279 contributes to the L-serine binding site. 343-346 lines the ATP pocket; that stretch reads EISS. Position 378 (S378) interacts with L-serine.

The protein belongs to the class-II aminoacyl-tRNA synthetase family. Type-1 seryl-tRNA synthetase subfamily. Homodimer. The tRNA molecule binds across the dimer.

The protein resides in the cytoplasm. It catalyses the reaction tRNA(Ser) + L-serine + ATP = L-seryl-tRNA(Ser) + AMP + diphosphate + H(+). The enzyme catalyses tRNA(Sec) + L-serine + ATP = L-seryl-tRNA(Sec) + AMP + diphosphate + H(+). It participates in aminoacyl-tRNA biosynthesis; selenocysteinyl-tRNA(Sec) biosynthesis; L-seryl-tRNA(Sec) from L-serine and tRNA(Sec): step 1/1. Catalyzes the attachment of serine to tRNA(Ser). Is also able to aminoacylate tRNA(Sec) with serine, to form the misacylated tRNA L-seryl-tRNA(Sec), which will be further converted into selenocysteinyl-tRNA(Sec). The chain is Serine--tRNA ligase from Pelagibacter ubique (strain HTCC1062).